Here is a 250-residue protein sequence, read N- to C-terminus: Insertion sequence IS232 putative ATP-binding protein (250 aa).

Position 108–115 (108–115 (GPSGVGKT)) interacts with ATP.

Belongs to the IS21/IS1162 putative ATP-binding protein family.

The chain is Insertion sequence IS232 putative ATP-binding protein from Bacillus thuringiensis subsp. berliner.